The chain runs to 422 residues: UDP-N-acetylglucosamine 1-carboxyvinyltransferase (422 aa).

22-23 contacts phosphoenolpyruvate; sequence KN. R93 contacts UDP-N-acetyl-alpha-D-glucosamine. C117 acts as the Proton donor in catalysis. 2-(S-cysteinyl)pyruvic acid O-phosphothioketal is present on C117. UDP-N-acetyl-alpha-D-glucosamine-binding positions include 122 to 126, 162 to 165, D307, and I329; these read RPVDL and KVSV.

Belongs to the EPSP synthase family. MurA subfamily.

It is found in the cytoplasm. It carries out the reaction phosphoenolpyruvate + UDP-N-acetyl-alpha-D-glucosamine = UDP-N-acetyl-3-O-(1-carboxyvinyl)-alpha-D-glucosamine + phosphate. The protein operates within cell wall biogenesis; peptidoglycan biosynthesis. Its function is as follows. Cell wall formation. Adds enolpyruvyl to UDP-N-acetylglucosamine. The protein is UDP-N-acetylglucosamine 1-carboxyvinyltransferase of Hamiltonella defensa subsp. Acyrthosiphon pisum (strain 5AT).